Consider the following 505-residue polypeptide: Lysine--tRNA ligase, heat inducible (505 aa).

Residues Lys114 and Lys156 each carry the N6-acetyllysine modification. The Mg(2+) site is built by Glu415 and Glu422.

Belongs to the class-II aminoacyl-tRNA synthetase family. Homodimer. The cofactor is Mg(2+).

The protein resides in the cytoplasm. The enzyme catalyses tRNA(Lys) + L-lysine + ATP = L-lysyl-tRNA(Lys) + AMP + diphosphate. The polypeptide is Lysine--tRNA ligase, heat inducible (lysU) (Escherichia coli O157:H7).